The primary structure comprises 78 residues: uncharacterized protein (78 aa).

A run of 2 helical transmembrane segments spans residues 5 to 24 (LALL…IKLM) and 39 to 61 (LWLQ…AGFI).

It localises to the cell membrane. This is an uncharacterized protein from Bacillus subtilis (strain 168).